Here is a 93-residue protein sequence, read N- to C-terminus: Large ribosomal subunit protein bL27 (93 aa).

A propeptide spanning residues Met1 to Phe8 is cleaved from the precursor. A disordered region spans residues Phe8–Gly29.

This sequence belongs to the bacterial ribosomal protein bL27 family. In terms of processing, the N-terminus is cleaved by ribosomal processing cysteine protease Prp.

This Limosilactobacillus fermentum (strain NBRC 3956 / LMG 18251) (Lactobacillus fermentum) protein is Large ribosomal subunit protein bL27.